The sequence spans 251 residues: DNA repair protein RecO (251 aa).

Belongs to the RecO family.

Its function is as follows. Involved in DNA repair and RecF pathway recombination. The chain is DNA repair protein RecO from Lactococcus lactis subsp. cremoris (strain SK11).